Here is a 569-residue protein sequence, read N- to C-terminus: Urease subunit alpha (569 aa).

Residues 131–569 (GGIDTHIHFI…LPLAQRYLLL (439 aa)) form the Urease domain. Positions 136, 138, and 219 each coordinate Ni(2+). At K219 the chain carries N6-carboxylysine. H221 lines the substrate pocket. Positions 248 and 274 each coordinate Ni(2+). The active-site Proton donor is H322. D362 provides a ligand contact to Ni(2+).

The protein belongs to the metallo-dependent hydrolases superfamily. Urease alpha subunit family. As to quaternary structure, heterotrimer of UreA (gamma), UreB (beta) and UreC (alpha) subunits. Three heterotrimers associate to form the active enzyme. It depends on Ni cation as a cofactor. Carboxylation allows a single lysine to coordinate two nickel ions.

Its subcellular location is the cytoplasm. It catalyses the reaction urea + 2 H2O + H(+) = hydrogencarbonate + 2 NH4(+). It functions in the pathway nitrogen metabolism; urea degradation; CO(2) and NH(3) from urea (urease route): step 1/1. The polypeptide is Urease subunit alpha (Synechococcus sp. (strain CC9311)).